Reading from the N-terminus, the 283-residue chain is Thymidylate synthase (283 aa).

Residue Arg22 coordinates dUMP. Catalysis depends on Cys160, which acts as the Nucleophile. DUMP is bound by residues 180–183 (RSCD), Asn191, and 221–223 (HIY). Asp183 lines the (6R)-5,10-methylene-5,6,7,8-tetrahydrofolate pocket. Ser282 is a binding site for (6R)-5,10-methylene-5,6,7,8-tetrahydrofolate.

This sequence belongs to the thymidylate synthase family. Bacterial-type ThyA subfamily. Homodimer.

It localises to the cytoplasm. The enzyme catalyses dUMP + (6R)-5,10-methylene-5,6,7,8-tetrahydrofolate = 7,8-dihydrofolate + dTMP. It participates in pyrimidine metabolism; dTTP biosynthesis. Catalyzes the reductive methylation of 2'-deoxyuridine-5'-monophosphate (dUMP) to 2'-deoxythymidine-5'-monophosphate (dTMP) while utilizing 5,10-methylenetetrahydrofolate (mTHF) as the methyl donor and reductant in the reaction, yielding dihydrofolate (DHF) as a by-product. This enzymatic reaction provides an intracellular de novo source of dTMP, an essential precursor for DNA biosynthesis. This is Thymidylate synthase from Shewanella pealeana (strain ATCC 700345 / ANG-SQ1).